Reading from the N-terminus, the 440-residue chain is Nuclear hormone receptor family member nhr-130 (440 aa).

Residues 34–110 (LYTCQVCALP…VGMDPGRFQF (77 aa)) constitute a DNA-binding region (nuclear receptor). 2 consecutive NR C4-type zinc fingers follow at residues 37–57 (CQVC…CRAC) and 74–93 (CKKQ…CKKC). Positions 184 to 439 (EKPLIARNNL…FSHPEMFEDT (256 aa)) constitute an NR LBD domain.

It belongs to the nuclear hormone receptor family.

It is found in the nucleus. Its function is as follows. Orphan nuclear receptor. The chain is Nuclear hormone receptor family member nhr-130 (nhr-130) from Caenorhabditis elegans.